Reading from the N-terminus, the 493-residue chain is Activin receptor type-1C (493 aa).

The N-terminal stretch at 1-25 is a signal peptide; it reads MTPARRSALSLALLLVALASDLAAG. Over 26-113 the chain is Extracellular; that stretch reads LKCVCLLCDS…PDAPRLGPTE (88 aa). The helical transmembrane segment at 114-134 threads the bilayer; sequence LTVVITVPVCLLSIAAMLTIW. Residues 135-493 lie on the Cytoplasmic side of the membrane; it reads ACQDRQCTYR…QLCVKEDCKA (359 aa). Positions 165-194 constitute a GS domain; sequence KTLKDLIYDATASGSGSGPPLLVQRTIART. Positions 195–485 constitute a Protein kinase domain; sequence IVLQEIVGKG…LRVKKTISQL (291 aa). Residues 201-209 and lysine 222 contribute to the ATP site; that span reads VGKGRFGEV. Aspartate 323 functions as the Proton acceptor in the catalytic mechanism.

It belongs to the protein kinase superfamily. TKL Ser/Thr protein kinase family. TGFB receptor subfamily. As to quaternary structure, binds the type 2 receptor protein ACVR2A. Requires Mg(2+) as cofactor. Mn(2+) serves as cofactor. As to expression, expressed in brain, kidney, lung, liver, testis, ovary, adrenal gland, heart, prostate, gastrointestinal tract, and spleen. Distributed throughout both adult and embryonic central nervous system and pancreatic islet cells.

Its subcellular location is the membrane. It carries out the reaction L-threonyl-[receptor-protein] + ATP = O-phospho-L-threonyl-[receptor-protein] + ADP + H(+). The catalysed reaction is L-seryl-[receptor-protein] + ATP = O-phospho-L-seryl-[receptor-protein] + ADP + H(+). Serine/threonine protein kinase which forms a receptor complex on ligand binding. The receptor complex consists of 2 type II and 2 type I transmembrane serine/threonine kinases. Type II receptors phosphorylate and activate type I receptors which autophosphorylate, then bind and activate SMAD transcriptional regulators, SMAD2 and SMAD3. Receptor for activin AB, activin B, activin E and NODAL. Upon NODAL binding, activation results in increased apoptosis and reduced proliferation through suppression of AKT signaling and the activation of Smad2-dependent signaling pathway in pancreatic beta-cells, trophoblasts, epithelial or neuronal cells. Acts as a positive regulator for macrophage activation partially through down-regulation of PPARG expression. The polypeptide is Activin receptor type-1C (Rattus norvegicus (Rat)).